A 283-amino-acid polypeptide reads, in one-letter code: Pantothenate synthetase (283 aa).

Residue 31 to 38 (MGALHEGH) participates in ATP binding. The active-site Proton donor is the histidine 38. (R)-pantoate is bound at residue glutamine 62. Glutamine 62 lines the beta-alanine pocket. An ATP-binding site is contributed by 148–151 (GKKD). Glutamine 154 contributes to the (R)-pantoate binding site. ATP-binding positions include valine 177 and 185–188 (RSSR).

Belongs to the pantothenate synthetase family. As to quaternary structure, homodimer.

Its subcellular location is the cytoplasm. It catalyses the reaction (R)-pantoate + beta-alanine + ATP = (R)-pantothenate + AMP + diphosphate + H(+). It functions in the pathway cofactor biosynthesis; (R)-pantothenate biosynthesis; (R)-pantothenate from (R)-pantoate and beta-alanine: step 1/1. Its function is as follows. Catalyzes the condensation of pantoate with beta-alanine in an ATP-dependent reaction via a pantoyl-adenylate intermediate. This Staphylococcus haemolyticus (strain JCSC1435) protein is Pantothenate synthetase.